A 346-amino-acid polypeptide reads, in one-letter code: Queuosine 5'-phosphate N-glycosylase/hydrolase (346 aa).

Residues His-49, Phe-243, Asp-245, Asp-310, and Asp-315 each contribute to the queuine site. The active-site Nucleophile or transition state stabilizer is Asp-245.

The protein belongs to the QNG1 protein family.

The enzyme catalyses queuosine 5'-phosphate + H2O = queuine + D-ribose 5-phosphate. Its function is as follows. Catalyzes the hydrolysis of queuosine 5'-phosphate, releasing the nucleobase queuine (q). Is required for salvage of queuine from exogenous queuosine (Q) that is imported and then converted to queuosine 5'-phosphate intracellularly. This Schizosaccharomyces pombe (strain 972 / ATCC 24843) (Fission yeast) protein is Queuosine 5'-phosphate N-glycosylase/hydrolase.